A 1069-amino-acid chain; its full sequence is Enteropeptidase (1069 aa).

The Cytoplasmic segment spans residues methionine 1–glutamate 18. Residues valine 19 to glutamate 47 form a helical; Signal-anchor for type II membrane protein membrane-spanning segment. At glycine 48 to histidine 1069 the chain is on the extracellular side. The region spanning lysine 54–serine 169 is the SEA domain. Residues asparagine 147, asparagine 197, and asparagine 212 are each glycosylated (N-linked (GlcNAc...) asparagine). The 42-residue stretch at isoleucine 227–threonine 268 folds into the LDL-receptor class A 1 domain. Intrachain disulfides connect cysteine 229–cysteine 242, cysteine 236–cysteine 255, cysteine 249–cysteine 266, and cysteine 270–cysteine 298. The CUB 1 domain maps to cysteine 270–phenylalanine 379. Asparagine 373, asparagine 380, asparagine 433, asparagine 515, asparagine 579, and asparagine 675 each carry an N-linked (GlcNAc...) asparagine glycan. An MAM domain is found at tyrosine 387–glutamine 549. The cysteines at positions 569 and 597 are disulfide-linked. The CUB 2 domain occupies cysteine 569–glycine 679. One can recognise an LDL-receptor class A 2 domain in the interval glutamate 686–arginine 724. 3 cysteine pairs are disulfide-bonded: cysteine 688/cysteine 700, cysteine 695/cysteine 713, and cysteine 707/cysteine 722. The SRCR domain maps to valine 723–serine 816. 4 N-linked (GlcNAc...) asparagine glycosylation sites follow: asparagine 727, asparagine 751, asparagine 770, and asparagine 791. 6 disulfide bridges follow: cysteine 802-cysteine 812, cysteine 817-cysteine 945, cysteine 859-cysteine 875, cysteine 959-cysteine 1027, cysteine 991-cysteine 1006, and cysteine 1017-cysteine 1045. The Peptidase S1 domain maps to isoleucine 830–histidine 1069. Histidine 874 functions as the Charge relay system in the catalytic mechanism. Asparagine 897 is a glycosylation site (N-linked (GlcNAc...) asparagine). Aspartate 925 (charge relay system) is an active-site residue. N-linked (GlcNAc...) asparagine glycans are attached at residues asparagine 936 and asparagine 999. The active-site Charge relay system is serine 1021.

This sequence belongs to the peptidase S1 family. As to quaternary structure, heterodimer of a catalytic (light) chain and a multidomain (heavy) chain linked by a disulfide bond. The chains are derived from a single precursor that is cleaved by a trypsin-like protease.

It localises to the membrane. The catalysed reaction is Activation of trypsinogen by selective cleavage of 6-Lys-|-Ile-7 bond.. Its function is as follows. Responsible for initiating activation of pancreatic proteolytic proenzymes (trypsin, chymotrypsin and carboxypeptidase A). It catalyzes the conversion of trypsinogen to trypsin which in turn activates other proenzymes including chymotrypsinogen, procarboxypeptidases, and proelastases. This is Enteropeptidase (Tmprss15) from Mus musculus (Mouse).